The chain runs to 491 residues: MSDIQAKEDAAPVDRQSSSSVVVPDEPSPLRKMISVASIAAGIQFGWALQLSLLTPYVQLLGVPHKWSSFIWLCGPISGLLVQPTVGYFSDRCKSRFGRRRPFIATGALLVALAVILIGFAADFGHTMGDKLDEAVKIRAVGFFVVGFWILDVANNTLQGPCRAFLGDLAAGDAKKTRTANAIFSFFMAVGNVLGYAAGSYTNLHKIFPFTVTKACDIYCANLKSCFIISITLLIVLTIIALWYVEDKQWSPNADSDNEKTPFFGEIFGAFKVMKRPMWMLLAVTALNWIAWFPFLLYDTDWMGREVYGGDSAGDDKMKKLYNHGIQVGSLGLMLNSIVLGVMSLVIGVISKKIGAKRLWGAVNIILAVCLAMTVLVTKKAEEHRKIAGRMALPTNAIRDGALSLFAILGIPLAITFSIPFALASIISSSSGAGQGLSLGVLNMAIVIPQMIVSFGVGPIDALFGGGNLPGFVVGAIAALISSVVALTVLP.

Basic and acidic residues predominate over residues 1-12 (MSDIQAKEDAAP). The disordered stretch occupies residues 1–26 (MSDIQAKEDAAPVDRQSSSSVVVPDE). At 1 to 33 (MSDIQAKEDAAPVDRQSSSSVVVPDEPSPLRKM) the chain is on the cytoplasmic side. Serine 17 is subject to Phosphoserine. A helical membrane pass occupies residues 34 to 54 (ISVASIAAGIQFGWALQLSLL). Over 55–68 (TPYVQLLGVPHKWS) the chain is Extracellular. The helical transmembrane segment at 69 to 89 (SFIWLCGPISGLLVQPTVGYF) threads the bilayer. Over 90 to 101 (SDRCKSRFGRRR) the chain is Cytoplasmic. The chain crosses the membrane as a helical span at residues 102–122 (PFIATGALLVALAVILIGFAA). Residues 123 to 139 (DFGHTMGDKLDEAVKIR) are Extracellular-facing. The helical transmembrane segment at 140-160 (AVGFFVVGFWILDVANNTLQG) threads the bilayer. Residues 161–181 (PCRAFLGDLAAGDAKKTRTAN) lie on the Cytoplasmic side of the membrane. A helical membrane pass occupies residues 182–202 (AIFSFFMAVGNVLGYAAGSYT). Over 203–224 (NLHKIFPFTVTKACDIYCANLK) the chain is Extracellular. A helical membrane pass occupies residues 225-245 (SCFIISITLLIVLTIIALWYV). The Cytoplasmic segment spans residues 246-277 (EDKQWSPNADSDNEKTPFFGEIFGAFKVMKRP). The helical transmembrane segment at 278 to 298 (MWMLLAVTALNWIAWFPFLLY) threads the bilayer. The Extracellular segment spans residues 299 to 329 (DTDWMGREVYGGDSAGDDKMKKLYNHGIQVG). The chain crosses the membrane as a helical span at residues 330 to 350 (SLGLMLNSIVLGVMSLVIGVI). The Cytoplasmic portion of the chain corresponds to 351–358 (SKKIGAKR). The chain crosses the membrane as a helical span at residues 359-379 (LWGAVNIILAVCLAMTVLVTK). The Extracellular portion of the chain corresponds to 380 to 406 (KAEEHRKIAGRMALPTNAIRDGALSLF). The helical transmembrane segment at 407–427 (AILGIPLAITFSIPFALASII) threads the bilayer. The Cytoplasmic segment spans residues 428 to 443 (SSSSGAGQGLSLGVLN). Residues 444–464 (MAIVIPQMIVSFGVGPIDALF) form a helical membrane-spanning segment. Residues 465–468 (GGGN) are Extracellular-facing. The chain crosses the membrane as a helical span at residues 469–489 (LPGFVVGAIAALISSVVALTV). The Cytoplasmic segment spans residues 490–491 (LP).

The protein belongs to the glycoside-pentoside-hexuronide (GPH) cation symporter transporter (TC 2.A.2.4) family. Widely expressed.

The protein resides in the cell membrane. The catalysed reaction is sucrose(out) + H(+)(out) = sucrose(in) + H(+)(in). Its pathway is glycan biosynthesis; sucrose metabolism. With respect to regulation, inhibited by protonophores (e.g. carbonyl cyanide m-chlorophenyl-hydrazone (CCCP)) and SH group inhibitors (e.g. p-chloromercuribenzene sulphonic acid (PCMBS)). In terms of biological role, high-affinity sucrose transporter. Responsible for the transport of sucrose into the cell, with the concomitant uptake of protons (symport system). Can also transport a wide range of glucosides, such as helicin, salicin, arbutin, maltose, fraxin, esculin, uranose, alpha-methylglucoside, alpha-phenylglucoside and beta-phenylglucoside. Plays a role in flowering time transition delay. The protein is Sucrose transport protein SUC9 of Arabidopsis thaliana (Mouse-ear cress).